A 453-amino-acid polypeptide reads, in one-letter code: Tubulin alpha-2 chain (453 aa).

Glutamine 11 is a GTP binding site. N6-acetyllysine is present on lysine 40. GTP-binding residues include glutamate 71, glycine 144, threonine 145, threonine 179, asparagine 206, and asparagine 228. Mg(2+) is bound at residue glutamate 71. The active site involves glutamate 254. The segment at 432-453 (YEEVGAETAEGEGEEEDFGEEY) is disordered.

It belongs to the tubulin family. As to quaternary structure, dimer of alpha and beta chains. A typical microtubule is a hollow water-filled tube with an outer diameter of 25 nm and an inner diameter of 15 nM. Alpha-beta heterodimers associate head-to-tail to form protofilaments running lengthwise along the microtubule wall with the beta-tubulin subunit facing the microtubule plus end conferring a structural polarity. Microtubules usually have 13 protofilaments but different protofilament numbers can be found in some organisms and specialized cells. Mg(2+) is required as a cofactor. In terms of processing, undergoes a tyrosination/detyrosination cycle, the cyclic removal and re-addition of a C-terminal tyrosine residue by the enzymes tubulin tyrosine carboxypeptidase (TTCP) and tubulin tyrosine ligase (TTL), respectively. Post-translationally, acetylation of alpha chains at Lys-40 stabilizes microtubules and affects affinity and processivity of microtubule motors. This modification has a role in multiple cellular functions, ranging from cell motility, cell cycle progression or cell differentiation to intracellular trafficking and signaling.

Its subcellular location is the cytoplasm. It is found in the cytoskeleton. The enzyme catalyses GTP + H2O = GDP + phosphate + H(+). In terms of biological role, tubulin is the major constituent of microtubules, a cylinder consisting of laterally associated linear protofilaments composed of alpha- and beta-tubulin heterodimers. Microtubules grow by the addition of GTP-tubulin dimers to the microtubule end, where a stabilizing cap forms. Below the cap, tubulin dimers are in GDP-bound state, owing to GTPase activity of alpha-tubulin. This is Tubulin alpha-2 chain (TUBA2) from Pelvetia fastigiata (Brown alga).